Consider the following 515-residue polypeptide: Protein nucleotidyltransferase YdiU (515 aa).

Residues Gly-101, Gly-103, Arg-104, Lys-124, Asp-136, Gly-137, Arg-194, and Arg-201 each coordinate ATP. Asp-269 functions as the Proton acceptor in the catalytic mechanism. Mg(2+) contacts are provided by Asn-270 and Asp-279. Asp-279 is a binding site for ATP.

Belongs to the SELO family. Mg(2+) is required as a cofactor. The cofactor is Mn(2+).

The enzyme catalyses L-seryl-[protein] + ATP = 3-O-(5'-adenylyl)-L-seryl-[protein] + diphosphate. It carries out the reaction L-threonyl-[protein] + ATP = 3-O-(5'-adenylyl)-L-threonyl-[protein] + diphosphate. The catalysed reaction is L-tyrosyl-[protein] + ATP = O-(5'-adenylyl)-L-tyrosyl-[protein] + diphosphate. It catalyses the reaction L-histidyl-[protein] + UTP = N(tele)-(5'-uridylyl)-L-histidyl-[protein] + diphosphate. The enzyme catalyses L-seryl-[protein] + UTP = O-(5'-uridylyl)-L-seryl-[protein] + diphosphate. It carries out the reaction L-tyrosyl-[protein] + UTP = O-(5'-uridylyl)-L-tyrosyl-[protein] + diphosphate. In terms of biological role, nucleotidyltransferase involved in the post-translational modification of proteins. It can catalyze the addition of adenosine monophosphate (AMP) or uridine monophosphate (UMP) to a protein, resulting in modifications known as AMPylation and UMPylation. The protein is Protein nucleotidyltransferase YdiU of Cytophaga hutchinsonii (strain ATCC 33406 / DSM 1761 / CIP 103989 / NBRC 15051 / NCIMB 9469 / D465).